The sequence spans 346 residues: Acrosin (346 aa).

Positions 1–19 (MALLLPLAVLLAACRPGHG) are cleaved as a signal peptide. 6 disulfides stabilise this stretch: Cys24–Cys146, Cys27–Cys154, Cys70–Cys86, Cys168–Cys240, Cys203–Cys219, and Cys230–Cys260. In terms of domain architecture, Peptidase S1 spans 41-284 (VVGGTEALHG…FYNWILLQVR (244 aa)). His85 functions as the Charge relay system in the catalytic mechanism. Asn128 is a glycosylation site (N-linked (GlcNAc...) asparagine). The active-site Charge relay system is Asp134. A glycan (N-linked (GlcNAc...) asparagine) is linked at Asn204. Ser234 serves as the catalytic Charge relay system. Residues 266 to 346 (PGIYTSTQHF…LLQSLWGSKA (81 aa)) constitute a propeptide that is removed on maturation.

The protein belongs to the peptidase S1 family. As to quaternary structure, heavy chain (catalytic) and a light chain linked by two disulfide bonds. Post-translationally, glycosylated.

The catalysed reaction is Preferential cleavage: Arg-|-Xaa, Lys-|-Xaa.. Inhibited by aprotinin, ovomucoid, soybean trypsin inhibitor, benzamidine, p-aminobenzamidine, and zinc ions. Activity also inhibited by a Kazal-type proteinase inhibitor. Functionally, serine protease of trypsin-like cleavage specificity. Synthesized in a zymogen form, proacrosin and stored in the acrosome. In Meleagris gallopavo (Wild turkey), this protein is Acrosin.